The sequence spans 348 residues: Mitogen-activated protein kinase kinase 5 (348 aa).

Disordered stretches follow at residues 1–26 (MKPI…DLSL) and 35–54 (LAVP…PASS). The residue at position 6 (S6) is a Phosphoserine; by ASK7. Residues 70-325 (LERVNRIGSG…AQQLLQHPFI (256 aa)) form the Protein kinase domain. Residues 76–84 (IGSGAGGTV) and K99 each bind ATP. The active-site Proton acceptor is D187. T215 is modified (phosphothreonine). S221 carries the post-translational modification Phosphoserine; by ASK7. A Phosphoserine modification is found at S221. The residue at position 225 (T225) is a Phosphothreonine; by ASK7. R313 is subject to ADP-ribosylarginine; by HopF2.

Belongs to the protein kinase superfamily. STE Ser/Thr protein kinase family. MAP kinase kinase subfamily. In terms of assembly, interacts with P.syringae type III effector HopF2. Interacts with BZR1. Interacts with MPK6 and MPK3. Interacts with RACK1A, RACK1B and RACK1C. Interacts with MAPKKK5 mainly in the cytosol. Binds to BASL. Interacts with MAPKKK20. Phosphorylation at Thr-215 and Ser-221 by MAP kinase kinase kinases positively regulates kinase activity. Phosphorylated by MAPKKK5 and MAPKKK20 in response to abscisic acid (ABA). Post-translationally, ADP-ribosylation at Arg-313 by P.syringae type III effector HopF2 reduces the ability of the protein to phosphorylate downstream MPK6. Expressed higher in stems and leaves than in flowers and roots.

It catalyses the reaction L-seryl-[protein] + ATP = O-phospho-L-seryl-[protein] + ADP + H(+). The enzyme catalyses L-threonyl-[protein] + ATP = O-phospho-L-threonyl-[protein] + ADP + H(+). The catalysed reaction is L-tyrosyl-[protein] + ATP = O-phospho-L-tyrosyl-[protein] + ADP + H(+). Activated through serine and threonine phosphorylation by MEKK1 and MAPKKK20 in response to abscisic acid (ABA). Inhibited through phosphorylation by GSK3/Shaggy-like kinase ASKs. Inhibited through ADP-Ribosylation by P.syringae HopF2. Activated after high light stress. Its function is as follows. Mitogen-activated protein kinase kinase (MAPKK) which regulates abscisic acid (ABA) responses in a MAPKKK20-MKK5-MPK6 cascade involved in root growth (e.g. root cell division and elongation) and stomatal response, probably via MAPK6 activation by protein phosphorylation. Involved in the second phase of hydrogen peroxide generation during hypersensitive response-like cell death. Involved in the innate immune MAP kinase signaling cascade (MEKK1, MKK4/MKK5 and MPK3/MPK6) downstream of bacterial flagellin receptor FLS2. Activates by phosphorylation the downstream MPK3 and MPK6. YDA-MKK4/MKK5-MPK3/MPK6 module regulates stomatal cell fate before the guard mother cell (GMC) is specified. This MAPK cascade also functions downstream of the ER receptor in regulating coordinated local cell proliferation, which shapes the morphology of plant organs. MKK4 and MKK5 participate in the regulation of floral organ abscission. Target of the Pseudomonas syringae type III effector HopF2, that inhibits the activation of the downstream MPK6 and PAMP-triggered immunity. Plays a critical role in high light stress tolerance by the mediation of the Cu/Zn SODs CSD1 and CSD2 gene expression. Phosphorylates BZR1 in vitro. This Arabidopsis thaliana (Mouse-ear cress) protein is Mitogen-activated protein kinase kinase 5.